The primary structure comprises 178 residues: PRA1 family protein 2 (178 aa).

Residues 1–41 (MSEVRLPPLRALDDFVLGSARLVAPDPCDPQRWCHRVINNL) are Cytoplasmic-facing. Residues 42–62 (LYYQTNYLICFGLGLALAGYV) traverse the membrane as a helical segment. At 63–64 (RP) the chain is on the extracellular side. The helical transmembrane segment at 65–85 (LHTLLSALVVAVALGMLVCAA) threads the bilayer. The Cytoplasmic portion of the chain corresponds to 86 to 96 (ENRAAVRRCRR). Residues 97-119 (SHPAACLAAVLAVGFLVLWAAGG) traverse the membrane as a helical segment. Over 120–122 (AGT) the chain is Extracellular. Residues 123-140 (FLLSIAGPVLLILVHASL) traverse the membrane as a helical segment. Over 141 to 178 (RLRNLKNKIENKIESIGLKRTPMGLLLEALGQEQEAGS) the chain is Cytoplasmic.

This sequence belongs to the PRA1 family. In terms of assembly, interacts with CCR5 and GDE1.

Its subcellular location is the endosome membrane. Its function is as follows. May be involved in ER/Golgi transport and vesicular traffic. Plays a proapoptotic role in cerulenin-induced neuroblastoma apoptosis. In Bos taurus (Bovine), this protein is PRA1 family protein 2 (PRAF2).